Consider the following 142-residue polypeptide: Ribosome-binding factor A (142 aa).

Residues glutamate 119–lysine 142 are disordered.

It belongs to the RbfA family. In terms of assembly, monomer. Binds 30S ribosomal subunits, but not 50S ribosomal subunits or 70S ribosomes.

The protein localises to the cytoplasm. One of several proteins that assist in the late maturation steps of the functional core of the 30S ribosomal subunit. Associates with free 30S ribosomal subunits (but not with 30S subunits that are part of 70S ribosomes or polysomes). Required for efficient processing of 16S rRNA. May interact with the 5'-terminal helix region of 16S rRNA. The sequence is that of Ribosome-binding factor A from Shewanella pealeana (strain ATCC 700345 / ANG-SQ1).